Reading from the N-terminus, the 751-residue chain is Protein WEAK CHLOROPLAST MOVEMENT UNDER BLUE LIGHT-like 3 (751 aa).

Ser113 is subject to Phosphoserine. Coiled coils occupy residues 165-558 and 588-647; these read ERRK…ALQE and QALE…KARD. Basic and acidic residues-rich tracts occupy residues 455–467 and 625–689; these read RERQDLEETKQKE and NREM…RNKE. 2 disordered regions span residues 455-479 and 625-751; these read RERQDLEETKQKESTGLARTNDKDA and NREM…HSHK. Over residues 704–723 the composition is skewed to low complexity; the sequence is GSSSNNTGGSTTTNNNNLTP.

This sequence belongs to the WEB family.

This Arabidopsis thaliana (Mouse-ear cress) protein is Protein WEAK CHLOROPLAST MOVEMENT UNDER BLUE LIGHT-like 3 (WEL3).